The following is a 260-amino-acid chain: Homeobox protein Hox-D11b (260 aa).

The segment covering 1-14 (MFSSSFSYPSKTSP) has biased composition (low complexity). 2 disordered regions span residues 1–21 (MFSSSFSYPSKTSPLTSPFLA) and 151–206 (ITPG…CTRR). Basic and acidic residues predominate over residues 167 to 179 (RSPDGESSEERAG). Positions 205–260 (RRKKRCPYSKQQIIELEREFLFNIYINKDRRMQLSHLLRLTDRCVNNPLNQDSFFT) form a DNA-binding region, homeobox; truncated.

The protein belongs to the Abd-B homeobox family.

It localises to the nucleus. Sequence-specific transcription factor which is part of a developmental regulatory system that provides cells with specific positional identities on the anterior-posterior axis. This Takifugu rubripes (Japanese pufferfish) protein is Homeobox protein Hox-D11b (hoxd11b).